We begin with the raw amino-acid sequence, 85 residues long: Putative membrane protein insertion efficiency factor (85 aa).

This sequence belongs to the UPF0161 family.

The protein localises to the cell inner membrane. Could be involved in insertion of integral membrane proteins into the membrane. This chain is Putative membrane protein insertion efficiency factor, found in Enterobacter sp. (strain 638).